A 360-amino-acid polypeptide reads, in one-letter code: Inward rectifier potassium channel 13 (360 aa).

Over 1–50 (MDGSHCKVIAPLLTERHQRMVTKDGHSTLQMDGAQTGLAYLRDAWGILMD) the chain is Cytoplasmic. A helical transmembrane segment spans residues 51–77 (MRWRWMMLVFSASFVIHWLVFAVLWYI). The Extracellular segment spans residues 78-105 (LAEMNGDLGLDHDAPPENHTICVKYITS). Positions 106-122 (FTAAFSFSLETQLTIGY) form an intramembrane region, helical; Pore-forming. Positions 119-124 (TIGYGT) match the Selectivity filter motif. At 123–131 (GTMFPSGDC) the chain is on the extracellular side. A helical transmembrane segment spans residues 132-157 (PSAIALLAIQMLLGLMLEAFITGAFV). Over 158–360 (AKIARPKNRA…FQISETGLTE (203 aa)) the chain is Cytoplasmic. S287 carries the phosphoserine modification.

This sequence belongs to the inward rectifier-type potassium channel (TC 1.A.2.1) family. As to quaternary structure, homotetramer. Interacts with RAB28; the interaction may facilitate cone outer segments phagocytosis. In terms of processing, phosphorylation at Ser-287 by PKA increases them.

Its subcellular location is the membrane. It localises to the cell membrane. The enzyme catalyses K(+)(in) = K(+)(out). Inhibited by Ba(2+) and Cs(+), although sensitivity to those inhibitors is much lower than in other Kir channels. Inward rectifier potassium channels are characterized by a greater tendency to allow potassium to flow into the cell rather than out of it. Their voltage dependence is regulated by the concentration of extracellular potassium; as external potassium is raised, the voltage range of the channel opening shifts to more positive voltages. The inward rectification is mainly due to the blockage of outward current by internal magnesium. KCNJ13 has a very low single channel conductance, low sensitivity to block by external barium and cesium, and no dependence of its inward rectification properties on the internal blocking particle magnesium. In Bos taurus (Bovine), this protein is Inward rectifier potassium channel 13 (KCNJ13).